Here is a 152-residue protein sequence, read N- to C-terminus: MPTILSSKPAFNSLFSYHLIGLISNKLVTLAPDYTGTKKTTWGARLHLQELRVQTKHRQIEPDIKNLPLQPIRYGSFRPVFHWIEKPCMLIGLCGLHSEVSFIANWPWGKPSEIGGCSIPCMLTGRGSELSYHIRASRRPLPGNRFHFQSFF.

Its subcellular location is the mitochondrion. This is an uncharacterized protein from Arabidopsis thaliana (Mouse-ear cress).